The chain runs to 137 residues: Large ribosomal subunit protein uL16 (137 aa).

The protein belongs to the universal ribosomal protein uL16 family. As to quaternary structure, part of the 50S ribosomal subunit.

Its function is as follows. Binds 23S rRNA and is also seen to make contacts with the A and possibly P site tRNAs. The polypeptide is Large ribosomal subunit protein uL16 (Baumannia cicadellinicola subsp. Homalodisca coagulata).